The primary structure comprises 732 residues: Prolyl endopeptidase-like (732 aa).

Active-site charge relay system residues include serine 575, aspartate 661, and histidine 707.

The protein belongs to the peptidase S9A family. As to quaternary structure, homodimer.

The protein localises to the cytoplasm. Its subcellular location is the cytosol. Serine peptidase whose precise substrate specificity remains unclear. Does not cleave peptides after a arginine or lysine residue. Regulates trans-Golgi network morphology and sorting by regulating the membrane binding of the AP-1 complex. May play a role in the regulation of synaptic vesicle exocytosis. This chain is Prolyl endopeptidase-like (PREPL), found in Gallus gallus (Chicken).